The following is a 68-amino-acid chain: UPF0435 protein SA1696 (68 aa).

The protein belongs to the UPF0435 family.

This Staphylococcus aureus (strain N315) protein is UPF0435 protein SA1696.